Consider the following 495-residue polypeptide: Probable endopolygalacturonase D (495 aa).

Positions 1-16 (MKRSALLASFLPLALG) are cleaved as a signal peptide. A disulfide bridge connects residues cysteine 154 and cysteine 169. 3 PbH1 repeats span residues 261 to 283 (MYNS…EIEN), 284 to 322 (TEYL…DIKQ), and 323 to 344 (SDFL…AVTS). The N-linked (GlcNAc...) asparagine glycan is linked to asparagine 295. Residue aspartate 337 is the Proton donor of the active site. Cysteine 339 and cysteine 355 form a disulfide bridge. Histidine 359 is a catalytic residue. N-linked (GlcNAc...) asparagine glycosylation is present at asparagine 371. PbH1 repeat units follow at residues 374–395 (VDGV…RIKS) and 403–425 (VYNV…DIQQ). Residues asparagine 410 and asparagine 444 are each glycosylated (N-linked (GlcNAc...) asparagine). 2 disulfide bridges follow: cysteine 464/cysteine 469 and cysteine 487/cysteine 494. Residues 469–492 (CSNFVFTDVDITGGSDDSCNYPSS) form a PbH1 6 repeat.

It belongs to the glycosyl hydrolase 28 family.

The protein localises to the secreted. The enzyme catalyses (1,4-alpha-D-galacturonosyl)n+m + H2O = (1,4-alpha-D-galacturonosyl)n + (1,4-alpha-D-galacturonosyl)m.. Its function is as follows. Involved in maceration and soft-rotting of plant tissue. Hydrolyzes the 1,4-alpha glycosidic bonds of de-esterified pectate in the smooth region of the plant cell wall. In Aspergillus niger (strain ATCC MYA-4892 / CBS 513.88 / FGSC A1513), this protein is Probable endopolygalacturonase D (pgaD).